The following is a 163-amino-acid chain: ATP synthase subunit b (163 aa).

A propeptide spanning residues 1 to 11 is cleaved from the precursor; sequence MLWKANVWVLG. The chain crosses the membrane as a helical span at residues 16 to 36; that stretch reads GISGGTIIYQLLMFIILLALL.

Belongs to the ATPase B chain family. In terms of assembly, F-type ATPases have 2 components, F(1) - the catalytic core - and F(0) - the membrane proton channel. F(1) has five subunits: alpha(3), beta(3), gamma(1), delta(1), epsilon(1). F(0) has three main subunits: a(1), b(2) and c(10-14). The alpha and beta chains form an alternating ring which encloses part of the gamma chain. F(1) is attached to F(0) by a central stalk formed by the gamma and epsilon chains, while a peripheral stalk is formed by the delta and b chains.

The protein resides in the cell membrane. F(1)F(0) ATP synthase produces ATP from ADP in the presence of a proton or sodium gradient. F-type ATPases consist of two structural domains, F(1) containing the extramembraneous catalytic core and F(0) containing the membrane proton channel, linked together by a central stalk and a peripheral stalk. During catalysis, ATP synthesis in the catalytic domain of F(1) is coupled via a rotary mechanism of the central stalk subunits to proton translocation. In terms of biological role, component of the F(0) channel, it forms part of the peripheral stalk, linking F(1) to F(0). This chain is ATP synthase subunit b, found in Bacillus sp. (strain PS3).